The following is a 344-amino-acid chain: Uroporphyrinogen decarboxylase (344 aa).

Substrate-binding positions include 23–27 (RQAGR), aspartate 73, tyrosine 149, threonine 204, and histidine 321.

It belongs to the uroporphyrinogen decarboxylase family. As to quaternary structure, homodimer.

It is found in the cytoplasm. It catalyses the reaction uroporphyrinogen III + 4 H(+) = coproporphyrinogen III + 4 CO2. It participates in porphyrin-containing compound metabolism; protoporphyrin-IX biosynthesis; coproporphyrinogen-III from 5-aminolevulinate: step 4/4. Functionally, catalyzes the decarboxylation of four acetate groups of uroporphyrinogen-III to yield coproporphyrinogen-III. In Francisella tularensis subsp. novicida (strain U112), this protein is Uroporphyrinogen decarboxylase.